Reading from the N-terminus, the 248-residue chain is Molybdate/tungstate transport system permease protein WtpB (248 aa).

Residues 1-9 (MGGRDYTLY) are Cytoplasmic-facing. A helical membrane pass occupies residues 10–30 (LFAALGSFLIVYIALPIIVIF). Residues 31 to 56 (TKQALDFRMLVKTIHDPLVIEALRNS) are Extracellular-facing. An ABC transmembrane type-1 domain is found at 53–239 (LRNSLLTATA…GISLGIFVVL (187 aa)). A helical membrane pass occupies residues 57–77 (LLTATATALISLLFGVPLGYV). The Cytoplasmic segment spans residues 78-91 (LARKDFRGKSLVQA). A helical membrane pass occupies residues 92–112 (IIDVPIVIPHSVVGIMLLVTF). The Extracellular portion of the chain corresponds to 113 to 115 (SNA). The helical transmembrane segment at 116–136 (ILDSYKGIIAAMLFVSAPFAI) threads the bilayer. Topologically, residues 137 to 164 (NSARDGFLAVDEKLEHVARTLGASKLRT) are cytoplasmic. Residues 165-185 (FFSISLPIALPSIASGAIMAW) form a helical membrane-spanning segment. Topologically, residues 186–223 (ARGISEVGAILIVAYYPKTAQVLVMEYFNNYGLRASRP) are extracellular. A helical transmembrane segment spans residues 224–244 (ISVILMGISLGIFVVLRWLIG). Over 245 to 248 (KAKS) the chain is Cytoplasmic.

The protein belongs to the binding-protein-dependent transport system permease family. In terms of assembly, the complex is composed of two ATP-binding proteins (WtpC), two transmembrane proteins (WtpB) and a solute-binding protein (WtpA).

Its subcellular location is the cell membrane. Its function is as follows. Part of the ABC transporter complex WtpABC involved in molybdate/tungstate import. Probably responsible for the translocation of the substrate across the membrane. In Pyrococcus abyssi (strain GE5 / Orsay), this protein is Molybdate/tungstate transport system permease protein WtpB (wtpB).